The chain runs to 434 residues: MDYLDLGPYSSASGTVRLPGSKSISNRVLLLAALAEGETTITNLLDSDDTRVMLDALGKLGVKLARDGDTCVVTGTRGAFTAKTADLFLGNAGTAVRPLTAALAVNGGDYRVHGVPRMHERPIGDLVDGLRQIGAQIDYELNEGYPPLRIKPATISVDAPIRVRGDVSSQFLTALLMTLPLVKAKDGRTVVEVDGELISKPYIDITIRLMARFGVTVERDGWQRFVVPAGVRYRSPGRIMVEGDASSASYFLAAGALGGGPLRVEGVGRASIQGDVGFANALMQMGANVTMGDDWIDVRGIGHDHGKLEPIDMDFNLIPDAAMTIAVAALFANGTSTLRNIASWRVKETDRIAAMATELRKVGAIVEEGPDYLVVTPPAKLTPNAAIDTYDDHRMAMCFSLVSLGGVPVRINDPKCVGKTFPDYFDRFAALAKA.

3 residues coordinate 3-phosphoshikimate: Lys-22, Ser-23, and Arg-27. Lys-22 is a binding site for phosphoenolpyruvate. Positions 93 and 121 each coordinate phosphoenolpyruvate. Ser-168, Ser-169, Gln-170, Ser-199, Asp-320, and Lys-347 together coordinate 3-phosphoshikimate. Gln-170 contributes to the phosphoenolpyruvate binding site. The Proton acceptor role is filled by Asp-320. Residues Arg-351, Arg-394, and Lys-419 each coordinate phosphoenolpyruvate.

Belongs to the EPSP synthase family. Monomer.

The protein resides in the cytoplasm. It carries out the reaction 3-phosphoshikimate + phosphoenolpyruvate = 5-O-(1-carboxyvinyl)-3-phosphoshikimate + phosphate. Its pathway is metabolic intermediate biosynthesis; chorismate biosynthesis; chorismate from D-erythrose 4-phosphate and phosphoenolpyruvate: step 6/7. Catalyzes the transfer of the enolpyruvyl moiety of phosphoenolpyruvate (PEP) to the 5-hydroxyl of shikimate-3-phosphate (S3P) to produce enolpyruvyl shikimate-3-phosphate and inorganic phosphate. In Burkholderia cenocepacia (strain ATCC BAA-245 / DSM 16553 / LMG 16656 / NCTC 13227 / J2315 / CF5610) (Burkholderia cepacia (strain J2315)), this protein is 3-phosphoshikimate 1-carboxyvinyltransferase.